Here is a 280-residue protein sequence, read N- to C-terminus: MSNNKQAWTGQLDLSVFNNGKKSVARDVFFEKALKVMRPVYLNQSDIPTFYIVNVGGGYLDGDRYTMNFNIDSDAKVILTSQGATKIYKTLNDHVEQYQTFNIKNNGYAEYVGDPIIAFENAKFYQHNVFNLESTASLFYTDILTPGYSKSDKRFSYTYMHLLNEIYVDDALVTFDNMLLDPQKQNVDGLGYMEDYTHLGSCYFIHPSVNQKFIEQVYEEIKHFQHKYDCRFGITHLPTHGFSLRILSNKTQVIESIITAVQCYVVKQIFDRDVDFLRKY.

It belongs to the UreD family. As to quaternary structure, ureD, UreF and UreG form a complex that acts as a GTP-hydrolysis-dependent molecular chaperone, activating the urease apoprotein by helping to assemble the nickel containing metallocenter of UreC. The UreE protein probably delivers the nickel.

The protein localises to the cytoplasm. In terms of biological role, required for maturation of urease via the functional incorporation of the urease nickel metallocenter. In Staphylococcus saprophyticus subsp. saprophyticus (strain ATCC 15305 / DSM 20229 / NCIMB 8711 / NCTC 7292 / S-41), this protein is Urease accessory protein UreD.